Reading from the N-terminus, the 712-residue chain is Satratoxin biosynthesis SC3 cluster transcription factor SAT20 (712 aa).

4 stretches are compositionally biased toward polar residues: residues 1 to 10 (MPNLPGSSDS), 25 to 36 (CSSTKPNAAQEN), 131 to 145 (SEPS…WPSL), and 269 to 282 (SLPS…SSTG). Disordered regions lie at residues 1 to 43 (MPNL…ELAQ), 115 to 145 (SQNA…WPSL), and 264 to 294 (PVSG…KADR). The segment at residues 306-339 (CFRCRMYKENCDPGLPCKNCMRVQVTRRTFFGPC) is a DNA-binding region (zn(2)-C6 fungal-type). A coiled-coil region spans residues 530 to 560 (QIQIMVAQVMLDKQKNALKRLQERALSKNRH).

The protein resides in the nucleus. In terms of biological role, transcriptional regulator that may regulate the expression of the satratoxin biosynthesis SC3 cluster, one of the 3 clusters involved in the biosynthesis of satratoxins, trichothecene mycotoxins that are associated with human food poisonings. This Stachybotrys chartarum (strain CBS 109288 / IBT 7711) (Toxic black mold) protein is Satratoxin biosynthesis SC3 cluster transcription factor SAT20.